The primary structure comprises 338 residues: Glycerol-3-phosphate dehydrogenase [NAD(P)+] (338 aa).

Serine 14, tyrosine 15, histidine 35, and lysine 109 together coordinate NADPH. The sn-glycerol 3-phosphate site is built by lysine 109, glycine 138, and threonine 140. NADPH is bound at residue alanine 142. Sn-glycerol 3-phosphate is bound by residues lysine 194, aspartate 247, serine 257, arginine 258, and asparagine 259. Lysine 194 functions as the Proton acceptor in the catalytic mechanism. Position 258 (arginine 258) interacts with NADPH. NADPH contacts are provided by valine 282 and glutamate 284.

Belongs to the NAD-dependent glycerol-3-phosphate dehydrogenase family.

The protein localises to the cytoplasm. The enzyme catalyses sn-glycerol 3-phosphate + NAD(+) = dihydroxyacetone phosphate + NADH + H(+). It catalyses the reaction sn-glycerol 3-phosphate + NADP(+) = dihydroxyacetone phosphate + NADPH + H(+). It functions in the pathway membrane lipid metabolism; glycerophospholipid metabolism. Catalyzes the reduction of the glycolytic intermediate dihydroxyacetone phosphate (DHAP) to sn-glycerol 3-phosphate (G3P), the key precursor for phospholipid synthesis. The sequence is that of Glycerol-3-phosphate dehydrogenase [NAD(P)+] from Shewanella oneidensis (strain ATCC 700550 / JCM 31522 / CIP 106686 / LMG 19005 / NCIMB 14063 / MR-1).